Here is a 265-residue protein sequence, read N- to C-terminus: NAD kinase (265 aa).

Catalysis depends on Asp45, which acts as the Proton acceptor. Residues 45-46 (DG), 122-123 (NE), Arg148, Asp150, 161-166 (TAYSKS), and Ala185 each bind NAD(+).

Belongs to the NAD kinase family. A divalent metal cation is required as a cofactor.

Its subcellular location is the cytoplasm. The enzyme catalyses NAD(+) + ATP = ADP + NADP(+) + H(+). Its function is as follows. Involved in the regulation of the intracellular balance of NAD and NADP, and is a key enzyme in the biosynthesis of NADP. Catalyzes specifically the phosphorylation on 2'-hydroxyl of the adenosine moiety of NAD to yield NADP. This chain is NAD kinase, found in Lactobacillus delbrueckii subsp. bulgaricus (strain ATCC 11842 / DSM 20081 / BCRC 10696 / JCM 1002 / NBRC 13953 / NCIMB 11778 / NCTC 12712 / WDCM 00102 / Lb 14).